Here is a 160-residue protein sequence, read N- to C-terminus: NADH-quinone oxidoreductase subunit B (160 aa).

[4Fe-4S] cluster-binding residues include Cys-37, Cys-38, Cys-102, and Cys-132.

This sequence belongs to the complex I 20 kDa subunit family. As to quaternary structure, NDH-1 is composed of 14 different subunits. Subunits NuoB, C, D, E, F, and G constitute the peripheral sector of the complex. [4Fe-4S] cluster serves as cofactor.

The protein resides in the cell inner membrane. The catalysed reaction is a quinone + NADH + 5 H(+)(in) = a quinol + NAD(+) + 4 H(+)(out). NDH-1 shuttles electrons from NADH, via FMN and iron-sulfur (Fe-S) centers, to quinones in the respiratory chain. Couples the redox reaction to proton translocation (for every two electrons transferred, four hydrogen ions are translocated across the cytoplasmic membrane), and thus conserves the redox energy in a proton gradient. The chain is NADH-quinone oxidoreductase subunit B from Neisseria meningitidis serogroup A / serotype 4A (strain DSM 15465 / Z2491).